The primary structure comprises 104 residues: Large ribosomal subunit protein bL27 (104 aa).

Residues 1-15 (MNNKYFLTKIDLQFF) constitute a propeptide that is removed on maturation.

Belongs to the bacterial ribosomal protein bL27 family. Post-translationally, the N-terminus is cleaved by ribosomal processing cysteine protease Prp.

This chain is Large ribosomal subunit protein bL27, found in Mycoplasma pneumoniae (strain ATCC 29342 / M129 / Subtype 1) (Mycoplasmoides pneumoniae).